The chain runs to 439 residues: Protein ABHD8 (439 aa).

2 disordered regions span residues 49–70 (AGPA…AAQG) and 124–156 (PAGS…RPKR). A compositionally biased stretch (gly residues) spans 136–145 (AGSGSGSGSG). The span at 146-156 (GRRRRARRPKR) shows a compositional bias: basic residues. The region spanning 177–279 (VLFFIHGVGG…HKVIMINGGG (103 aa)) is the AB hydrolase-1 domain. Residues S252, D370, and H398 each act as charge relay system in the active site.

It belongs to the AB hydrolase superfamily. In terms of assembly, interacts with NLRP3 (via NACHT and LLR domains); this interaction is enhanced in the presence of NLRP3 inflammasome inducers, such as ATP, nigericin, silica, or alum. Interacts with ZDHHC12. (Microbial infection) Interacts with SARS-CoV-2 nucleoprotein N; this interaction disrupts the NLRP3-ABHD8 association, enhancing NLRP3 stability, ultimately leading to increased inflammasome activation.

Its subcellular location is the cytoplasm. Negatively regulates NLRP3-driven inflammation. Promotes NLRP3 degradation through the chaperone-mediated autophagy (CMA) pathway, hence attenuating inflammasome activation and IL1B secretion. Acts by recruiting palmitoyltransferase ZDHHC12 to NLRP3, facilitating NLRP3 palmitoylation and subsequent degradation. The protein is Protein ABHD8 of Homo sapiens (Human).